The chain runs to 287 residues: ATP synthase gamma chain (287 aa).

This sequence belongs to the ATPase gamma chain family. In terms of assembly, F-type ATPases have 2 components, CF(1) - the catalytic core - and CF(0) - the membrane proton channel. CF(1) has five subunits: alpha(3), beta(3), gamma(1), delta(1), epsilon(1). CF(0) has three main subunits: a, b and c.

It is found in the cell inner membrane. Produces ATP from ADP in the presence of a proton gradient across the membrane. The gamma chain is believed to be important in regulating ATPase activity and the flow of protons through the CF(0) complex. This chain is ATP synthase gamma chain, found in Methylococcus capsulatus (strain ATCC 33009 / NCIMB 11132 / Bath).